The following is a 500-amino-acid chain: MNQRRSESRPGNHRLQAYAEPGKGDSGGAGPLSGSARRGRGGGGAIRVRRPCWSGGAGRGGGPAWAVRLPTVTAGWTWPALRTLSSLRAGPSEPHSPGRRPPRAGRPLCQADPQPGKAARRSLEPDPAQTGPRPARAAGMSEARKGPDEAEESQYDSGIESLRSLRSLPESTSAPASGPSDGSPQPCTHPPGPVKEPQEKEDADGERADSTYGSSSLTYTLSLLGGPEAEDPAPRLPLPHVGALSPQQLEALTYISEDGDTLVHLAVIHEAPAVLLCCLALLPQEVLDIQNNLYQTALHLAVHLDQPGAVRALVLKGASRALQDRHGDTALHVACQRQHLACARCLLEGRPEPGRGTSHSLDLQLQNWQGLACLHIATLQKNQPLMELLLRNGADIDVQEGTSGKTALHLAVETQERGLVQFLLQAGAQVDARMLNGCTPLHLAAGRGLMGISSTLCKAGADSLLRNVEDETPQDLTEESLVLLPFDDLKISGKLLLCTD.

Positions 1-10 (MNQRRSESRP) are enriched in basic and acidic residues. 3 disordered regions span residues 1-66 (MNQR…PAWA), 84-215 (LSSL…YGSS), and 222-241 (SLLG…LPHV). A phosphoserine mark is found at serine 157, serine 161, and serine 183. Low complexity predominate over residues 161–186 (SLRSLRSLPESTSAPASGPSDGSPQP). Positions 196 to 209 (EPQEKEDADGERAD) are enriched in basic and acidic residues. ANK repeat units follow at residues 258–291 (DGDT…DIQN), 293–322 (LYQT…SRAL), 326–355 (HGDT…EPGR), 369–398 (QGLA…DIDV), 403–432 (SGKT…QVDA), and 436–465 (NGCT…DSLL).

Belongs to the NF-kappa-B inhibitor family. In terms of assembly, interacts with RELA, REL, NFKB1 nuclear factor NF-kappa-B p50 subunit and NFKB2 nuclear factor NF-kappa-B p52 subunit. Interacts with HNRNPA2B1; the interaction may be mediated by the RRM2 domain of HNRNPA2B1, and HNRNPA2B1 may interact simultaneously with FAM76B and either NFKBIA or NFKBIE to form a complex. Post-translationally, serine phosphorylated; followed by proteasome-dependent degradation. In terms of tissue distribution, highly expressed in spleen, testis and lung, followed by kidney, pancreas, heart, placenta and brain. Also expressed in granulocytes and macrophages.

The protein resides in the cytoplasm. Functionally, sequesters NF-kappa-B transcription factor complexes in the cytoplasm, thereby inhibiting their activity. Sequestered complexes include NFKB1-RELA (p50-p65) and NFKB1-REL (p50-c-Rel) complexes. Limits B-cell activation in response to pathogens, and also plays an important role in B-cell development. The sequence is that of NF-kappa-B inhibitor epsilon (NFKBIE) from Homo sapiens (Human).